The primary structure comprises 160 residues: Ribosome maturation factor RimP (160 aa).

Belongs to the RimP family.

Its subcellular location is the cytoplasm. Functionally, required for maturation of 30S ribosomal subunits. The sequence is that of Ribosome maturation factor RimP from Symbiobacterium thermophilum (strain DSM 24528 / JCM 14929 / IAM 14863 / T).